A 143-amino-acid chain; its full sequence is Large ribosomal subunit protein uL11 (143 aa).

The protein belongs to the universal ribosomal protein uL11 family. As to quaternary structure, part of the ribosomal stalk of the 50S ribosomal subunit. Interacts with L10 and the large rRNA to form the base of the stalk. L10 forms an elongated spine to which L12 dimers bind in a sequential fashion forming a multimeric L10(L12)X complex. One or more lysine residues are methylated.

Functionally, forms part of the ribosomal stalk which helps the ribosome interact with GTP-bound translation factors. This chain is Large ribosomal subunit protein uL11, found in Cellvibrio japonicus (strain Ueda107) (Pseudomonas fluorescens subsp. cellulosa).